The chain runs to 733 residues: Wall-associated receptor kinase 5 (733 aa).

The N-terminal stretch at 1-23 (MKVHSLFLMAIFFYLAYTQLVKA) is a signal peptide. Residues 24–330 (QPRDDCQTRC…IDTPKEEPKY (307 aa)) lie on the Extracellular side of the membrane. 9 N-linked (GlcNAc...) asparagine glycosylation sites follow: Asn57, Asn77, Asn110, Asn137, Asn184, Asn206, Asn218, Asn232, and Asn247. Residues 231–278 (GNQTCEQVVGRNICGGNSTCFDSTRGKGYNCKCLQGFDGNPYLSDGCQ) enclose the EGF-like 1 domain. Intrachain disulfides connect Cys235–Cys250, Cys244–Cys261, Cys263–Cys277, Cys283–Cys296, Cys290–Cys305, and Cys307–Cys320. The 43-residue stretch at 279 to 321 (DINECTTRIHNCSDTSTCENTLGSFHCQCPSGSDLNTTTMSCI) folds into the EGF-like 2; calcium-binding domain. An N-linked (GlcNAc...) asparagine glycan is attached at Asn289. The N-linked (GlcNAc...) asparagine glycan is linked to Asn314. A helical transmembrane segment spans residues 331–351 (LGWTTVLLGTTIGFLIILLTI). Residues 352-733 (SYIQQKMRHR…VTRLDIETGR (382 aa)) are Cytoplasmic-facing. At Thr397 the chain carries Phosphothreonine. A Protein kinase domain is found at 408 to 691 (YNESRILGQG…RVKTTKHQWS (284 aa)). ATP contacts are provided by residues 414 to 422 (LGQGGQGTV) and Lys436. Tyr481 carries the post-translational modification Phosphotyrosine. The Proton acceptor role is filled by Asp533. Thr567 and Thr572 each carry phosphothreonine. Tyr580 bears the Phosphotyrosine mark.

The protein belongs to the protein kinase superfamily. Ser/Thr protein kinase family. In terms of tissue distribution, predominantly expressed in green tissues such as stems and leaves.

The protein resides in the membrane. The enzyme catalyses L-seryl-[protein] + ATP = O-phospho-L-seryl-[protein] + ADP + H(+). It carries out the reaction L-threonyl-[protein] + ATP = O-phospho-L-threonyl-[protein] + ADP + H(+). Its function is as follows. Serine/threonine-protein kinase that may function as a signaling receptor of extracellular matrix component. Binding to pectin may have significance in the control of cell expansion, morphogenesis and development. This chain is Wall-associated receptor kinase 5 (WAK5), found in Arabidopsis thaliana (Mouse-ear cress).